Consider the following 1006-residue polypeptide: UPF0182 protein Arth_2749 (1006 aa).

Helical transmembrane passes span 18-38 (GALT…IFFA), 64-84 (IIIF…AIRI), 115-135 (VVMI…AASQ), 168-188 (FLGF…IAGI), 211-231 (QIHL…NFWL), 260-280 (SILA…AVIG), and 287-307 (IGTA…PWVI). 3 disordered regions span residues 490-519 (GAPE…FTGN), 896-923 (KAGD…GGTD), and 975-1006 (LGSE…SPSN). The span at 495–509 (SPHREQDRPAGKEGD) shows a compositional bias: basic and acidic residues. Composition is skewed to low complexity over residues 911-923 (AGGS…GGTD) and 979-1000 (GASP…AATP).

This sequence belongs to the UPF0182 family.

Its subcellular location is the cell membrane. The polypeptide is UPF0182 protein Arth_2749 (Arthrobacter sp. (strain FB24)).